The following is a 424-amino-acid chain: Serine--tRNA ligase (424 aa).

Position 230–232 (230–232) interacts with L-serine; that stretch reads TAE. 261–263 provides a ligand contact to ATP; the sequence is RSE. Glutamate 284 contacts L-serine. An ATP-binding site is contributed by 348–351; that stretch reads EISS. Serine 384 is an L-serine binding site.

It belongs to the class-II aminoacyl-tRNA synthetase family. Type-1 seryl-tRNA synthetase subfamily. Homodimer. The tRNA molecule binds across the dimer.

Its subcellular location is the cytoplasm. It catalyses the reaction tRNA(Ser) + L-serine + ATP = L-seryl-tRNA(Ser) + AMP + diphosphate + H(+). It carries out the reaction tRNA(Sec) + L-serine + ATP = L-seryl-tRNA(Sec) + AMP + diphosphate + H(+). Its pathway is aminoacyl-tRNA biosynthesis; selenocysteinyl-tRNA(Sec) biosynthesis; L-seryl-tRNA(Sec) from L-serine and tRNA(Sec): step 1/1. Catalyzes the attachment of serine to tRNA(Ser). Is also able to aminoacylate tRNA(Sec) with serine, to form the misacylated tRNA L-seryl-tRNA(Sec), which will be further converted into selenocysteinyl-tRNA(Sec). The sequence is that of Serine--tRNA ligase from Streptococcus pneumoniae (strain Hungary19A-6).